We begin with the raw amino-acid sequence, 234 residues long: Large ribosomal subunit protein uL1 (234 aa).

Belongs to the universal ribosomal protein uL1 family. As to quaternary structure, part of the 50S ribosomal subunit.

Binds directly to 23S rRNA. The L1 stalk is quite mobile in the ribosome, and is involved in E site tRNA release. In terms of biological role, protein L1 is also a translational repressor protein, it controls the translation of the L11 operon by binding to its mRNA. The sequence is that of Large ribosomal subunit protein uL1 from Pseudoalteromonas translucida (strain TAC 125).